The sequence spans 568 residues: MAGLESKVSDMKIKSDVVFYIDEASGNDETGNGSQTSPFKTAIHALETDANCTIFVKKNGSEEFEPITTNALKKAKKGVEQAAKKKAKAAEAEAAAAARAAAAKEAEAKRLEAAKNIVLKEPKDAPAAKKIAIIDSTNFRDSRVRVNGWVHRMRTQKGIIFIILRDGTGFLQCVLSGKVYDRASYDFINLGPESTVCLYGVIKELPEGKSAPGNHELVVDYYQILHAAPTGEEAFTNRLNAEAEPSYLLDQRHLVIRGETASSVLKVRARALRAMRDTFENLKMTEVTPPCMVQTQVEGGATLFKFNYYGQDAYLTQSSQLYLEAALPALGSVYTIQESFRAEKSLTRRHLSEFTHVEFELPFVNFGEFLEIIEEFICQTIDRLLDDPIATPLIKQLNPDFVKPSRPFMRLSYEDAIKYLNEHNILTPEGEQHKFGDDIAEAAERKMTDQINRPIFLTYFPLEIKSFYMKRVVDRPELTESVDCLMPNVGEIVGGSMRISDIQELLAAYKREGIDPAPYYWFTEQRKYGTTEHGGCGLGLERFLAWLCDRYTVRECCLFPRFTERCTP.

The protein belongs to the class-II aminoacyl-tRNA synthetase family.

Its subcellular location is the cytoplasm. It carries out the reaction tRNA(Asn) + L-asparagine + ATP = L-asparaginyl-tRNA(Asn) + AMP + diphosphate + H(+). Functionally, cytosolic asparaginyl-tRNA synthetase which catalyzes the specific attachment of asparagine to its cognate tRNA. This Schizosaccharomyces pombe (strain 972 / ATCC 24843) (Fission yeast) protein is Probable asparagine--tRNA ligase, cytoplasmic (nrs1).